Consider the following 152-residue polypeptide: Ribonuclease pancreatic beta-type (152 aa).

The N-terminal stretch at 1–25 is a signal peptide; it reads MGLXKSFALFSLLVLVLGWVQPSLS. Residues 25 to 53 are disordered; that stretch reads SGESRESSADKFKRQHMDPDSPSKSSPTY. A compositionally biased stretch (basic and acidic residues) spans 27 to 45; that stretch reads ESRESSADKFKRQHMDPDS. Substrate-binding residues include Lys35 and Arg38. The active-site Proton acceptor is the His40. 4 disulfides stabilise this stretch: Cys54-Cys112, Cys68-Cys123, Cys86-Cys138, and Cys93-Cys100. Substrate-binding positions include 69–73 and Lys94; that span reads KRVNT. His147 (proton donor) is an active-site residue.

It belongs to the pancreatic ribonuclease family. In terms of assembly, monomer.

It is found in the secreted. The enzyme catalyses an [RNA] containing cytidine + H2O = an [RNA]-3'-cytidine-3'-phosphate + a 5'-hydroxy-ribonucleotide-3'-[RNA].. It carries out the reaction an [RNA] containing uridine + H2O = an [RNA]-3'-uridine-3'-phosphate + a 5'-hydroxy-ribonucleotide-3'-[RNA].. Its function is as follows. Endonuclease that catalyzes the cleavage of RNA on the 3' side of pyrimidine nucleotides. Acts on single-stranded and double-stranded RNA. The chain is Ribonuclease pancreatic beta-type from Rattus tiomanicus (Malayan field rat).